The following is a 412-amino-acid chain: tRNA (guanine-N(7)-)-methyltransferase non-catalytic subunit WDR4 (412 aa).

Residue Ala-2 is modified to N-acetylalanine. WD repeat units follow at residues 3–40 (GSVG…IYDC), 50–90 (NKGE…LFRT), 94–131 (QCLS…SFSV), 137–174 (CGRL…VSWA), 180–218 (IESF…LWEY), 230–273 (ASLQ…IFQL), and 319–373 (PVGD…SYLK). The segment at 377–412 (ERLQQQLEKKQRRRSPPPGPDGHAKKMRPGEATLSC) is disordered. Ser-391 and Ser-411 each carry phosphoserine.

It belongs to the WD repeat TRM82 family. Non-catalytic component of the METTL1-WDR4 complex, composed of METTL1 and WDR4. Interacts with FEN1; the interaction is direct.

It is found in the nucleus. The protein localises to the chromosome. It participates in tRNA modification; N(7)-methylguanine-tRNA biosynthesis. Functionally, non-catalytic component of the METTL1-WDR4 methyltransferase complex required for the formation of N(7)-methylguanine in a subset of RNA species, such as tRNAs, mRNAs and microRNAs (miRNAs). In the METTL1-WDR4 methyltransferase complex, WDR4 acts as a scaffold for tRNA-binding. Required for the formation of N(7)-methylguanine at position 46 (m7G46) in a large subset of tRNAs that contain the 5'-RAGGU-3' motif within the variable loop. M7G46 interacts with C13-G22 in the D-loop to stabilize tRNA tertiary structure and protect tRNAs from decay. Also required for the formation of N(7)-methylguanine at internal sites in a subset of mRNAs. Also required for methylation of a specific subset of miRNAs, such as let-7. Independently of METTL1, also plays a role in genome stability: localizes at the DNA replication site and regulates endonucleolytic activities of FEN1. This is tRNA (guanine-N(7)-)-methyltransferase non-catalytic subunit WDR4 from Homo sapiens (Human).